The chain runs to 266 residues: Elongator complex protein 6 (266 aa).

This sequence belongs to the ELP6 family. In terms of assembly, component of the elongator complex which consists of ELP1, ELP2, ELP3, ELP4, ELP5 and ELP6.

Its subcellular location is the cytoplasm. The protein resides in the nucleus. It participates in tRNA modification; 5-methoxycarbonylmethyl-2-thiouridine-tRNA biosynthesis. Functionally, component of the elongator complex which is required for multiple tRNA modifications, including mcm5U (5-methoxycarbonylmethyl uridine), mcm5s2U (5-methoxycarbonylmethyl-2-thiouridine), and ncm5U (5-carbamoylmethyl uridine). The elongator complex catalyzes formation of carboxymethyluridine in the wobble base at position 34 in tRNAs. Involved in cell migration. This Homo sapiens (Human) protein is Elongator complex protein 6.